The chain runs to 318 residues: Methionyl-tRNA formyltransferase (318 aa).

Position 110–113 (110–113) interacts with (6S)-5,6,7,8-tetrahydrofolate; that stretch reads SLLP.

The protein belongs to the Fmt family.

The catalysed reaction is L-methionyl-tRNA(fMet) + (6R)-10-formyltetrahydrofolate = N-formyl-L-methionyl-tRNA(fMet) + (6S)-5,6,7,8-tetrahydrofolate + H(+). Its function is as follows. Attaches a formyl group to the free amino group of methionyl-tRNA(fMet). The formyl group appears to play a dual role in the initiator identity of N-formylmethionyl-tRNA by promoting its recognition by IF2 and preventing the misappropriation of this tRNA by the elongation apparatus. The protein is Methionyl-tRNA formyltransferase of Lacticaseibacillus casei (strain BL23) (Lactobacillus casei).